A 163-amino-acid chain; its full sequence is HTH-type transcriptional regulator IscR (163 aa).

Residues 2–131 (RLTSKGRYAV…NNITLGELVN (130 aa)) form the HTH rrf2-type domain. Residues 28–51 (LADISERQGISLSYLEQLFSRLRK) constitute a DNA-binding region (H-T-H motif). 3 residues coordinate [2Fe-2S] cluster: C92, C98, and C104.

Requires [2Fe-2S] cluster as cofactor.

Its function is as follows. Regulates the transcription of several operons and genes involved in the biogenesis of Fe-S clusters and Fe-S-containing proteins. In Enterobacter sp. (strain 638), this protein is HTH-type transcriptional regulator IscR.